A 585-amino-acid chain; its full sequence is Probable long-chain-fatty-acid--AMP ligase FadD30 (585 aa).

Belongs to the ATP-dependent AMP-binding enzyme family.

Its pathway is lipid metabolism; fatty acid biosynthesis. Catalyzes the activation of long-chain fatty acids as acyl-adenylates (acyl-AMP), which are then transferred to a multifunctional polyketide synthase (PKS) for further chain extension. This is Probable long-chain-fatty-acid--AMP ligase FadD30 (fadD30) from Mycobacterium tuberculosis (strain CDC 1551 / Oshkosh).